Consider the following 774-residue polypeptide: 1,4-alpha-glucan branching enzyme GlgB 1 (774 aa).

The segment at 1–66 (MTPRPSSSGP…AEVAVSPAPD (66 aa)) is disordered. The span at 29–40 (KPAKAAKKKAPR) shows a compositional bias: basic residues. Positions 41-55 (RTTASANASATTSVS) are enriched in low complexity. Residue D457 is the Nucleophile of the active site. E510 acts as the Proton donor in catalysis. The segment at 748-774 (YGGGDVVNPDPVKPEPQGGTAARRASG) is disordered.

It belongs to the glycosyl hydrolase 13 family. GlgB subfamily. In terms of assembly, monomer.

It carries out the reaction Transfers a segment of a (1-&gt;4)-alpha-D-glucan chain to a primary hydroxy group in a similar glucan chain.. The protein operates within glycan biosynthesis; glycogen biosynthesis. In terms of biological role, catalyzes the formation of the alpha-1,6-glucosidic linkages in glycogen by scission of a 1,4-alpha-linked oligosaccharide from growing alpha-1,4-glucan chains and the subsequent attachment of the oligosaccharide to the alpha-1,6 position. In Streptomyces coelicolor (strain ATCC BAA-471 / A3(2) / M145), this protein is 1,4-alpha-glucan branching enzyme GlgB 1 (glgB1).